The sequence spans 134 residues: Replication enhancer protein (134 aa).

The protein belongs to the geminiviridae replication enhancer protein family. In terms of assembly, homooligomer. Interacts with the replication-associated protein (REP). Interacts with host proliferating cell nuclear antigen (PCNA). Interacts with host retinoblastoma-related protein 1 (RBR1), and may thereby deregulate the host cell cycle. Oligomerization and interaction with PCNA are necessary for optimal replication enhancement.

Increases viral DNA accumulation. Enhances infectivity and symptom expression. In Tomato yellow leaf curl Sardinia virus (TYLCSV), this protein is Replication enhancer protein.